A 550-amino-acid chain; its full sequence is CTP synthase (550 aa).

Residues Met-1–Leu-267 are amidoligase domain. CTP is bound at residue Ser-14. A UTP-binding site is contributed by Ser-14. Residues Ser-15–Leu-20 and Asp-72 each bind ATP. Asp-72 and Glu-141 together coordinate Mg(2+). Residues Asp-148–Glu-150, Lys-188–Gln-193, and Lys-224 each bind CTP. Residues Lys-188–Gln-193 and Lys-224 contribute to the UTP site. Residues Thr-292–Gly-545 form the Glutamine amidotransferase type-1 domain. Gly-354 contacts L-glutamine. The active-site Nucleophile; for glutamine hydrolysis is the Cys-381. Residues Leu-382–Gln-385, Glu-405, and Arg-473 each bind L-glutamine. Residues His-518 and Glu-520 contribute to the active site.

Belongs to the CTP synthase family. In terms of assembly, homotetramer.

The catalysed reaction is UTP + L-glutamine + ATP + H2O = CTP + L-glutamate + ADP + phosphate + 2 H(+). The enzyme catalyses L-glutamine + H2O = L-glutamate + NH4(+). It catalyses the reaction UTP + NH4(+) + ATP = CTP + ADP + phosphate + 2 H(+). Its pathway is pyrimidine metabolism; CTP biosynthesis via de novo pathway; CTP from UDP: step 2/2. Allosterically activated by GTP, when glutamine is the substrate; GTP has no effect on the reaction when ammonia is the substrate. The allosteric effector GTP functions by stabilizing the protein conformation that binds the tetrahedral intermediate(s) formed during glutamine hydrolysis. Inhibited by the product CTP, via allosteric rather than competitive inhibition. Functionally, catalyzes the ATP-dependent amination of UTP to CTP with either L-glutamine or ammonia as the source of nitrogen. Regulates intracellular CTP levels through interactions with the four ribonucleotide triphosphates. The polypeptide is CTP synthase (Nitratidesulfovibrio vulgaris (strain DSM 19637 / Miyazaki F) (Desulfovibrio vulgaris)).